We begin with the raw amino-acid sequence, 115 residues long: NADH-ubiquinone oxidoreductase chain 3 (115 aa).

3 consecutive transmembrane segments (helical) span residues 3 to 23, 55 to 75, and 84 to 104; these read FALILMINTLLALLLMIITFW, FFLVAITFLLFDLEIALLLPL, and LPLMVMSSLLLIIILALSLAY.

Belongs to the complex I subunit 3 family. Core subunit of respiratory chain NADH dehydrogenase (Complex I) which is composed of 45 different subunits. Interacts with TMEM186. Interacts with TMEM242.

It is found in the mitochondrion inner membrane. The catalysed reaction is a ubiquinone + NADH + 5 H(+)(in) = a ubiquinol + NAD(+) + 4 H(+)(out). Functionally, core subunit of the mitochondrial membrane respiratory chain NADH dehydrogenase (Complex I) which catalyzes electron transfer from NADH through the respiratory chain, using ubiquinone as an electron acceptor. Essential for the catalytic activity of complex I. The chain is NADH-ubiquinone oxidoreductase chain 3 from Homo sapiens (Human).